Reading from the N-terminus, the 424-residue chain is L-glutamine:2-deoxy-scyllo-inosose aminotransferase (424 aa).

An N6-(pyridoxal phosphate)lysine modification is found at Lys-202.

It belongs to the DegT/DnrJ/EryC1 family. L-glutamine:2-deoxy-scyllo-inosose/scyllo-inosose aminotransferase subfamily. Pyridoxal 5'-phosphate serves as cofactor.

The catalysed reaction is 2-deoxy-L-scyllo-inosose + L-glutamine = 2-deoxy-scyllo-inosamine + 2-oxoglutaramate. It catalyses the reaction 3-amino-2,3-dideoxy-scyllo-inosose + L-glutamine = 2-deoxystreptamine + 2-oxoglutaramate. It functions in the pathway metabolic intermediate biosynthesis; 2-deoxystreptamine biosynthesis; 2-deoxystreptamine from D-glucose 6-phosphate: step 2/4. Its pathway is antibiotic biosynthesis; lividomycin biosynthesis. Its function is as follows. Catalyzes the PLP-dependent transamination of 2-deoxy-scyllo-inosose (2-DOI) to form 2-deoxy-scyllo-inosamine (2-DOIA) using L-glutamine as the amino donor. Also catalyzes the transamination of 3-amino-2,3-dideoxy-scyllo-inosose (keto-2-DOIA) into 2-deoxystreptamine (2-DOS). The sequence is that of L-glutamine:2-deoxy-scyllo-inosose aminotransferase (livS) from Streptomyces lividus.